A 417-amino-acid chain; its full sequence is Autophagy-related protein 18 (417 aa).

4 WD repeats span residues 1 to 36 (MSMN…KSYE), 76 to 114 (ELTF…LVYT), 185 to 225 (AHKS…KLYQ), and 230 to 269 (SMPS…GLSK). Residues 226–230 (FRRGS) carry the L/FRRG motif motif. Residues 267–300 (LSKTSSPSRKLESSRGSGDESAVESASSEMSSRK) form a disordered region. A compositionally biased stretch (low complexity) spans 285–296 (DESAVESASSEM). WD repeat units lie at residues 300–346 (KHNG…AWIK) and 355–395 (GGSG…GGEG).

This sequence belongs to the WD repeat PROPPIN family. Component of the PI(3,5)P2 regulatory complex.

It is found in the preautophagosomal structure membrane. Its subcellular location is the vacuole membrane. It localises to the endosome membrane. In terms of biological role, the PI(3,5)P2 regulatory complex regulates both the synthesis and turnover of phosphatidylinositol 3,5-bisphosphate (PtdIns(3,5)P2). Necessary for proper vacuole morphology. Plays an important role in osmotically-induced vacuole fragmentation. Required for cytoplasm to vacuole transport (Cvt) vesicle formation, pexophagy and starvation-induced autophagy. Involved in correct ATG9 trafficking to the pre-autophagosomal structure. Might also be involved in premeiotic DNA replication. This is Autophagy-related protein 18 (ATG18) from Coccidioides immitis (strain RS) (Valley fever fungus).